Reading from the N-terminus, the 181-residue chain is Isopentenyl-diphosphate Delta-isomerase (181 aa).

Mn(2+)-binding residues include His-25 and His-32. A Nudix hydrolase domain is found at 30–164 (PLHLAFSCWL…PWAFSPWMVM (135 aa)). The active site involves Cys-67. His-69 contributes to the Mn(2+) binding site. Glu-87 lines the Mg(2+) pocket. Mn(2+)-binding residues include Glu-114 and Glu-116. The active site involves Glu-116.

This sequence belongs to the IPP isomerase type 1 family. As to quaternary structure, homodimer. It depends on Mg(2+) as a cofactor. Mn(2+) is required as a cofactor.

Its subcellular location is the cytoplasm. The enzyme catalyses isopentenyl diphosphate = dimethylallyl diphosphate. Its pathway is isoprenoid biosynthesis; dimethylallyl diphosphate biosynthesis; dimethylallyl diphosphate from isopentenyl diphosphate: step 1/1. In terms of biological role, catalyzes the 1,3-allylic rearrangement of the homoallylic substrate isopentenyl (IPP) to its highly electrophilic allylic isomer, dimethylallyl diphosphate (DMAPP). In Salmonella agona (strain SL483), this protein is Isopentenyl-diphosphate Delta-isomerase.